An 85-amino-acid polypeptide reads, in one-letter code: Homeobox protein knotted-1-like 8 (85 aa).

Residues 1–21 (ELKHQLLRKYGGYLGGLRQEF) form the ELK domain. The segment at residues 22 to 85 (SKRKKKGKLP…NQRKRHWKPA (64 aa)) is a DNA-binding region (homeobox; TALE-type).

It belongs to the TALE/KNOX homeobox family. Strongly expressed in ear inflorescence primordia and shoot meristem. Weakly expressed in embryos. Absent from leaves.

It localises to the nucleus. Its function is as follows. Probably binds to the DNA sequence 5'-TGAC-3'. The sequence is that of Homeobox protein knotted-1-like 8 (KNOX8) from Zea mays (Maize).